A 964-amino-acid chain; its full sequence is MVAKGRIIRVTGPLVVADGMKGAKMYEVVRVGELGLIGEIIRLEGDKAVIQVYEETAGVRPGEPVVGTGASLSVELGPGLLTSIYDGIQRPLEVIREKTGDFIARGVTAPALPRDKKWHFIPKAKVGDKVVGGDIIGEVPETSIIVHKIMVPPGIEGEIVEIAEEGDYTIEEVIAKVKTPSGEIKELKMYQRWPVRVKRPYKEKLPPEVPLITGQRVIDTFFPQAKGGTAAIPGPFGSGKCVDGDTLVLTKEFGLIKIKELYEKLDGKGRKIVEGNEEWTELEKPITVYGYKDGKIVEIKATHVYKGVSSGMVEIRTRTGRKIKVTPIHRLFTGRVTKDGLILKEVMAMHVKPGDRIAVVKKIDGGEYIKLDSSNVGEIKVPEILNEELAEFLGYLMANGTLKSGIIEIYCDDESLLERVNSLSLKLFGVGGRIVQKVDGKALVIQSKPLVDVLRRLGVPEDKKVENWKVPRELLLSPSNVVRAFVNAYIKGKEEVEITLASEEGAYELSYLFAKLGIYVTISKSGEYYKVRVSRRGNLDTIPVEVNGMPKVLPYEDFRKFAKSIGLEEVAENHLQHIIFDEVIDVRYIPEPQEVYDVTTETHNFVGGNMPTLLHNTVTQHQLAKWSDAQVVIYIGCGERGNEMTDVLEEFPKLKDPKTGKPLMERTVLIANTSNMPVAAREASIYTGITIAEYFRDMGYDVALMADSTSRWAEALREISGRLEEMPGEEGYPAYLASKLAEFYERAGRVVTLGSDYRVGSVSVIGAVSPPGGDFSEPVVQNTLRVVKVFWALDADLARRRHFPAINWLTSYSLYVDAVKDWWHKNIDPEWKAMRDKAMALLQKESELQEIVRIVGPDALPERERAILLVARMLREDYLQQDAFDEVDTYCPPEKQVTMMRVLLNFYDKTMEAINRGVPLEEIAKLPVREEIGRMKFERDVSKIRSLIDKTNEQFEELFKKYGA.

A DOD-type homing endonuclease domain is found at 392–518 (FLGYLMANGT…LSYLFAKLGI (127 aa)).

The protein belongs to the ATPase alpha/beta chains family. In terms of assembly, has multiple subunits with at least A(3), B(3), C, D, E, F, H, I and proteolipid K(x). In terms of processing, this protein undergoes a protein self splicing that involves a post-translational excision of the VDE intervening region (intein) followed by peptide ligation.

It localises to the cell membrane. The enzyme catalyses ATP + H2O + 4 H(+)(in) = ADP + phosphate + 5 H(+)(out). In terms of biological role, component of the A-type ATP synthase that produces ATP from ADP in the presence of a proton gradient across the membrane. The A chain is the catalytic subunit. This is A-type ATP synthase subunit A from Pyrococcus horikoshii (strain ATCC 700860 / DSM 12428 / JCM 9974 / NBRC 100139 / OT-3).